The chain runs to 23 residues: Cysteine-rich venom protein 24 (23 aa).

Residues 1–23 (VDFASESXNKRENQQIVDKHNAL) are disordered. Over residues 8 to 23 (XNKRENQQIVDKHNAL) the composition is skewed to basic and acidic residues.

This sequence belongs to the CRISP family. Post-translationally, contains 8 disulfide bonds. Expressed by the venom gland.

Its subcellular location is the secreted. This is Cysteine-rich venom protein 24 from Naja kaouthia (Monocled cobra).